We begin with the raw amino-acid sequence, 173 residues long: Translation initiation factor IF-3 (173 aa).

Belongs to the IF-3 family. As to quaternary structure, monomer.

It localises to the cytoplasm. Functionally, IF-3 binds to the 30S ribosomal subunit and shifts the equilibrium between 70S ribosomes and their 50S and 30S subunits in favor of the free subunits, thus enhancing the availability of 30S subunits on which protein synthesis initiation begins. This is Translation initiation factor IF-3 from Ehrlichia ruminantium (strain Gardel).